A 352-amino-acid polypeptide reads, in one-letter code: ATPase GET3 (352 aa).

26-33 is a binding site for ATP; it reads KGGVGKTT. Asp57 is an active-site residue. ATP-binding residues include Glu243 and Asn270. Residues Cys283 and Cys286 each coordinate Zn(2+).

Belongs to the arsA ATPase family. As to quaternary structure, homodimer. Component of the Golgi to ER traffic (GET) complex, which is composed of GET1, GET2 and GET3. Within the complex, GET1 and GET2 form a heterotetramer which is stabilized by phosphatidylinositol binding and which binds to the GET3 homodimer. Interacts with the chloride channel protein GEF1.

It is found in the cytoplasm. Its subcellular location is the endoplasmic reticulum. The protein resides in the golgi apparatus. ATPase required for the post-translational delivery of tail-anchored (TA) proteins to the endoplasmic reticulum. Recognizes and selectively binds the transmembrane domain of TA proteins in the cytosol. This complex then targets to the endoplasmic reticulum by membrane-bound receptors GET1 and GET2, where the tail-anchored protein is released for insertion. This process is regulated by ATP binding and hydrolysis. ATP binding drives the homodimer towards the closed dimer state, facilitating recognition of newly synthesized TA membrane proteins. ATP hydrolysis is required for insertion. Subsequently, the homodimer reverts towards the open dimer state, lowering its affinity for the GET1-GET2 receptor, and returning it to the cytosol to initiate a new round of targeting. Cooperates with the HDEL receptor ERD2 to mediate the ATP-dependent retrieval of resident ER proteins that contain a C-terminal H-D-E-L retention signal from the Golgi to the ER. Involved in low-level resistance to the oxyanions arsenite and arsenate, and in heat tolerance. In Vanderwaltozyma polyspora (strain ATCC 22028 / DSM 70294 / BCRC 21397 / CBS 2163 / NBRC 10782 / NRRL Y-8283 / UCD 57-17) (Kluyveromyces polysporus), this protein is ATPase GET3.